A 331-amino-acid chain; its full sequence is Tetraacyldisaccharide 4'-kinase (331 aa).

59–66 (FVGGTGKT) is an ATP binding site.

It belongs to the LpxK family.

The catalysed reaction is a lipid A disaccharide + ATP = a lipid IVA + ADP + H(+). Its pathway is glycolipid biosynthesis; lipid IV(A) biosynthesis; lipid IV(A) from (3R)-3-hydroxytetradecanoyl-[acyl-carrier-protein] and UDP-N-acetyl-alpha-D-glucosamine: step 6/6. Functionally, transfers the gamma-phosphate of ATP to the 4'-position of a tetraacyldisaccharide 1-phosphate intermediate (termed DS-1-P) to form tetraacyldisaccharide 1,4'-bis-phosphate (lipid IVA). The sequence is that of Tetraacyldisaccharide 4'-kinase from Alkalilimnicola ehrlichii (strain ATCC BAA-1101 / DSM 17681 / MLHE-1).